Here is a 1489-residue protein sequence, read N- to C-terminus: Chromatin-remodeling ATPase INO80 (1489 aa).

A phosphoserine mark is found at Ser-65, Ser-115, and Ser-133. 2 disordered regions span residues 137–311 (NEKD…KLSM) and 393–452 (KRER…GLPT). Composition is skewed to acidic residues over residues 140–164 (DADE…EDEA) and 214–291 (DENE…DFNP). A compositionally biased stretch (low complexity) spans 301–311 (SSSSSSTKLSM). The segment covering 393 to 402 (KREREREEAL) has biased composition (basic and acidic residues). A DBINO domain is found at 476–601 (IWKDMARKDS…SHFIGRKIKT (126 aa)). Residue Ser-610 is modified to Phosphoserine. The 173-residue stretch at 718 to 890 (ANLYDQGING…WALLHFIMPS (173 aa)) folds into the Helicase ATP-binding domain. 731–738 (DEMGLGKT) serves as a coordination point for ATP. The DEAQ box motif lies at 841-844 (DEAQ). In terms of domain architecture, Helicase C-terminal spans 1303 to 1467 (KLDELLVKLK…TIEVGENDSE (165 aa)). The segment at 1456–1489 (IKTIEVGENDSEVTREGSKSISQDGIKEAASALA) is disordered.

Belongs to the SNF2/RAD54 helicase family. Component of the chromatin-remodeling INO80 complex, at least composed of ARP4, ARP5, ARP8, RVB1, RVB2, TAF14, NHP10, IES1, IES3, IES4, IES6, ACT1, IES2, IES5 and INO80.

Its subcellular location is the nucleus. The catalysed reaction is ATP + H2O = ADP + phosphate + H(+). In terms of biological role, ATPase component of the INO80 complex which remodels chromatin by shifting nucleosomes and is involved in DNA repair. Its ability to induce transcription of some phosphate-responsive genes is modulated by inositol polyphosphates. The INO80 complex is involved in DNA repair by associating with 'Ser-129' phosphorylated H2A histones as a response to DNA damage. The chain is Chromatin-remodeling ATPase INO80 (INO80) from Saccharomyces cerevisiae (strain ATCC 204508 / S288c) (Baker's yeast).